A 219-amino-acid chain; its full sequence is UPF0376 protein C36C5.12 (219 aa).

The Cytoplasmic portion of the chain corresponds to 1–20 (MGRLDVKNSWIEFHQDEMTS). A helical; Signal-anchor for type II membrane protein membrane pass occupies residues 21–43 (FLKLAIIGTVLLGVAHGANLTAA). At 44-219 (EKETYCELRS…VSKCDFSRLG (176 aa)) the chain is on the extracellular side. N-linked (GlcNAc...) asparagine glycans are attached at residues asparagine 104 and asparagine 204.

This sequence belongs to the UPF0376 family.

The protein resides in the membrane. The polypeptide is UPF0376 protein C36C5.12 (Caenorhabditis elegans).